Here is a 96-residue protein sequence, read N- to C-terminus: Small ribosomal subunit protein bS16 (96 aa).

Belongs to the bacterial ribosomal protein bS16 family.

The sequence is that of Small ribosomal subunit protein bS16 from Oenococcus oeni (strain ATCC BAA-331 / PSU-1).